The following is a 199-amino-acid chain: Small ribosomal subunit protein uS4c (199 aa).

The span at 1–24 (MESDQSKVESDQSKMESDQSKVES) shows a compositional bias: basic and acidic residues. The tract at residues 1-35 (MESDQSKVESDQSKMESDQSKVESDQSISQSTSKK) is disordered. Positions 84–146 (MRLDNIIFRL…QKSQELIKRN (63 aa)) constitute an S4 RNA-binding domain.

Belongs to the universal ribosomal protein uS4 family. Part of the 30S ribosomal subunit. Contacts protein S5. The interaction surface between S4 and S5 is involved in control of translational fidelity.

It is found in the plastid. It localises to the chloroplast. In terms of biological role, one of the primary rRNA binding proteins, it binds directly to 16S rRNA where it nucleates assembly of the body of the 30S subunit. Functionally, with S5 and S12 plays an important role in translational accuracy. This chain is Small ribosomal subunit protein uS4c (rps4), found in Psilotum nudum (Whisk fern).